An 870-amino-acid polypeptide reads, in one-letter code: A-kinase anchor protein 2 (870 aa).

Disordered regions lie at residues P14 to E43 and I103 to D165. At S122 the chain carries Phosphoserine. The span at G133 to A151 shows a compositional bias: polar residues. Position 152 is a phosphoserine (S152). Positions S152 to C161 are enriched in low complexity. A Glycyl lysine isopeptide (Lys-Gly) (interchain with G-Cter in SUMO1); alternate cross-link involves residue K174. K174 participates in a covalent cross-link: Glycyl lysine isopeptide (Lys-Gly) (interchain with G-Cter in SUMO2); alternate. A coiled-coil region spans residues E213–L307. A disordered region spans residues K233–K324. The segment covering L259 to Q274 has biased composition (basic and acidic residues). The span at Q275–L302 shows a compositional bias: low complexity. Basic and acidic residues predominate over residues A313–K324. S347 bears the Phosphoserine mark. Residues E409–G436 are disordered. Low complexity predominate over residues S410–G424. 3 positions are modified to phosphoserine: S472, S476, and S528. The span at F506 to P543 shows a compositional bias: polar residues. Disordered regions lie at residues F506–E577 and Q595–G688. At T537 the chain carries Phosphothreonine. Residues L576 to Q589 are PKA-RII subunit binding domain. Basic and acidic residues predominate over residues Q595–S608. S641 is modified (phosphoserine). Basic and acidic residues predominate over residues Q644–G665. Positions K720–S755 form a coiled coil. Phosphoserine is present on residues S730, S758, S789, and S796. A disordered region spans residues Q740–N814. The segment covering S755–Y774 has biased composition (polar residues).

The protein localises to the apical cell membrane. In terms of biological role, binds to regulatory subunit (RII) of protein kinase A. May be involved in establishing polarity in signaling systems or in integrating PKA-RII isoforms with downstream effectors to capture, amplify and focus diffuse, trans-cellular signals carried by cAMP. Binds to and modulates the structure of the actin cytoskeleton. The polypeptide is A-kinase anchor protein 2 (Rattus norvegicus (Rat)).